The chain runs to 160 residues: Secreted RxLR effector protein RXLR-C11 (160 aa).

Positions 1–19 are cleaved as a signal peptide; it reads MHFSLVLLVFAAIVIPICA. The RxLR-dEER motif lies at 58–75; the sequence is RLLRMNDKAVISDHEEER.

The protein belongs to the RxLR effector family.

The protein localises to the secreted. The protein resides in the host cell membrane. It is found in the host nucleus. Functionally, secreted effector that suppresses pattern-triggered immunity (PTI) in plant host. This is Secreted RxLR effector protein RXLR-C11 from Plasmopara halstedii (Downy mildew of sunflower).